The sequence spans 469 residues: Glutamate--tRNA ligase (469 aa).

The short motif at 9–19 (PSPTGFLHVGG) is the 'HIGH' region element. Positions 98, 100, 125, and 127 each coordinate Zn(2+). The 'KMSKS' region motif lies at 236–240 (KLSKR). ATP is bound at residue lysine 239.

It belongs to the class-I aminoacyl-tRNA synthetase family. Glutamate--tRNA ligase type 1 subfamily. As to quaternary structure, monomer. The cofactor is Zn(2+).

The protein localises to the cytoplasm. It catalyses the reaction tRNA(Glu) + L-glutamate + ATP = L-glutamyl-tRNA(Glu) + AMP + diphosphate. Its function is as follows. Catalyzes the attachment of glutamate to tRNA(Glu) in a two-step reaction: glutamate is first activated by ATP to form Glu-AMP and then transferred to the acceptor end of tRNA(Glu). In Shewanella putrefaciens (strain CN-32 / ATCC BAA-453), this protein is Glutamate--tRNA ligase.